We begin with the raw amino-acid sequence, 163 residues long: RNA pyrophosphohydrolase (163 aa).

One can recognise a Nudix hydrolase domain in the interval 6 to 149 (GYRLNVGIVI…KRDVYRQVMK (144 aa)). The Nudix box signature appears at 38 to 59 (GGIHLTESPEEAMYRELFEELG).

This sequence belongs to the Nudix hydrolase family. RppH subfamily. A divalent metal cation serves as cofactor.

Its function is as follows. Accelerates the degradation of transcripts by removing pyrophosphate from the 5'-end of triphosphorylated RNA, leading to a more labile monophosphorylated state that can stimulate subsequent ribonuclease cleavage. The sequence is that of RNA pyrophosphohydrolase from Hamiltonella defensa subsp. Acyrthosiphon pisum (strain 5AT).